Here is a 555-residue protein sequence, read N- to C-terminus: Glucose-6-phosphate isomerase (555 aa).

Residues 169–170 (GS), 219–224 (SKTFTT), Gln364, Glu368, His399, and Lys521 each bind D-glucose 6-phosphate. The active-site Proton donor is Glu368. Active-site residues include His399 and Lys521.

This sequence belongs to the GPI family. Homodimer.

It is found in the cytoplasm. The protein resides in the cytosol. The catalysed reaction is alpha-D-glucose 6-phosphate = beta-D-fructose 6-phosphate. It participates in carbohydrate degradation; glycolysis; D-glyceraldehyde 3-phosphate and glycerone phosphate from D-glucose: step 2/4. Its function is as follows. In the cytoplasm, catalyzes the conversion of glucose-6-phosphate to fructose-6-phosphate, the second step in glycolysis, and the reverse reaction during gluconeogenesis. The sequence is that of Glucose-6-phosphate isomerase (RAG2) from Kluyveromyces lactis (strain ATCC 8585 / CBS 2359 / DSM 70799 / NBRC 1267 / NRRL Y-1140 / WM37) (Yeast).